A 705-amino-acid chain; its full sequence is Dolichyl-diphosphooligosaccharide--protein glycosyltransferase subunit STT3A (705 aa).

The Cytoplasmic segment spans residues 1 to 17 (MTKFGFLRLSYEKQDTL). The helical transmembrane segment at 18 to 38 (LKLLILSMAAVLSFSTRLFAV) threads the bilayer. Topologically, residues 39 to 119 (LRFESVIHEF…IDIRNVCVFL (81 aa)) are lumenal. The DXD motif 1 signature appears at 47 to 49 (EFD). Residue D49 participates in Mn(2+) binding. A helical membrane pass occupies residues 120-138 (APLFSSFTTIVTYHLTKEL). Over 139-140 (KD) the chain is Cytoplasmic. The helical transmembrane segment at 141-158 (AGAGLLAAAMIAVVPGYI) threads the bilayer. Residues 159–169 (SRSVAGSYDNE) lie on the Lumenal side of the membrane. Mn(2+) contacts are provided by D167 and E169. A DXD motif 2 motif is present at residues 167 to 169 (DNE). A helical membrane pass occupies residues 170 to 189 (GIAIFCMLLTYYMWIKAVKT). Topologically, residues 190-191 (GS) are cytoplasmic. A helical transmembrane segment spans residues 192–206 (ICWAAKCALAYFYMV). Residues 207–211 (SSWGG) lie on the Lumenal side of the membrane. Residues 212–228 (YVFLINLIPLHVLVLML) form a helical membrane-spanning segment. Over 229–233 (TGRFS) the chain is Cytoplasmic. A helical transmembrane segment spans residues 234-259 (HRIYVAYCTVYCLGTILSMQISFVGF). Residues 260 to 267 (QPVLSSEH) are Lumenal-facing. A helical membrane pass occupies residues 268–287 (MAAFGVFGLCQIHAFVDYLR). Topologically, residues 288-300 (SKLNPQQFEVLFR) are cytoplasmic. The chain crosses the membrane as a helical span at residues 301-321 (SVISLVGFVLLTVGALLMLTG). At 322–356 (KISPWTGRFYSLLDPSYAKNNIPIIASVSEHQPTT) the chain is on the lumenal side. The SVSE motif motif lies at 348–351 (SVSE). A helical membrane pass occupies residues 357 to 379 (WSSYYFDLQLLVFMFPVGLYYCF). At 380 to 385 (SNLSDA) the chain is on the cytoplasmic side. The chain crosses the membrane as a helical span at residues 386–402 (RIFIIMYGVTSMYFSAV). At 403-406 (MVRL) the chain is on the lumenal side. A dolichyl diphosphooligosaccharide-binding site is contributed by R405. The chain crosses the membrane as a helical span at residues 407-428 (MLVLAPVMCILSGIGVSQVLST). The Cytoplasmic portion of the chain corresponds to 429-453 (YMKNLDISRPDKKSKKQQDSTYPIK). The chain crosses the membrane as a helical span at residues 454–473 (NEVASGMILVMAFFLITYTF). Topologically, residues 474–705 (HSTWVTSEAY…DLDNRGLSRT (232 aa)) are lumenal. An interacts with target acceptor peptide in protein substrate region spans residues 525 to 527 (WWD). The short motif at 525–529 (WWDYG) is the WWDYG motif element. Position 530 (Y530) interacts with dolichyl diphosphooligosaccharide. 2 N-linked (GlcNAc...) asparagine glycosylation sites follow: N537 and N544. N548 carries an N-linked (GlcNAc...) (high mannose) asparagine glycan. Positions 592-599 (DINKFLWM) match the DK motif motif.

Belongs to the STT3 family. As to quaternary structure, component of the oligosaccharyltransferase (OST) complex. There are 2 OST complexes, OST-A and OST-B, which contain STT3A or STT3B as catalytic subunit, respectively. OST-A and OST-B contain common core subunits RPN1, RPN2, OST48, OST4, DAD1 and TMEM258, and OST-A contains DC2/OSTC and KRTCAP2/KCP2 specific accessory subunits. OST-A complex assembly occurs through the formation of 3 subcomplexes. Subcomplex 1 contains RPN1 and TMEM258, subcomplex 2 contains the OST-A-specific subunits STT3A, DC2/OSTC, and KCP2 as well as the core subunit OST4, and subcomplex 3 contains RPN2, DAD1, and OST48. The OST-A complex can form stable complexes with the Sec61 complex or with both the Sec61 and TRAP complexes. Requires Mg(2+) as cofactor. Mn(2+) is required as a cofactor. In terms of tissue distribution, expressed at high levels in placenta, liver, muscle and pancreas, and at very low levels in brain, lung and kidney. Expressed in skin fibroblasts (at protein level).

Its subcellular location is the endoplasmic reticulum. It localises to the endoplasmic reticulum membrane. The catalysed reaction is a di-trans,poly-cis-dolichyl diphosphooligosaccharide + L-asparaginyl-[protein] = N(4)-(oligosaccharide-(1-&gt;4)-N-acetyl-beta-D-glucosaminyl-(1-&gt;4)-N-acetyl-beta-D-glucosaminyl)-L-asparaginyl-[protein] + a di-trans,poly-cis-dolichyl diphosphate + H(+). Its pathway is protein modification; protein glycosylation. Its activity is regulated as follows. STT3A, but not STT3B, is specifically inhibited by the N-glycosylation inhibitor NGI-235, which prevents productive binding pose of the glycan donor in the active site of STT3A. Catalytic subunit of the oligosaccharyl transferase (OST) complex that catalyzes the initial transfer of a defined glycan (Glc(3)Man(9)GlcNAc(2) in eukaryotes) from the lipid carrier dolichol-pyrophosphate to an asparagine residue within an Asn-X-Ser/Thr consensus motif in nascent polypeptide chains, the first step in protein N-glycosylation. N-glycosylation occurs cotranslationally and the complex associates with the Sec61 complex at the channel-forming translocon complex that mediates protein translocation across the endoplasmic reticulum (ER). All subunits are required for a maximal enzyme activity. This subunit contains the active site and the acceptor peptide and donor lipid-linked oligosaccharide (LLO) binding pockets. STT3A is present in the majority of OST complexes and mediates cotranslational N-glycosylation of most sites on target proteins, while STT3B-containing complexes are required for efficient post-translational glycosylation and mediate glycosylation of sites that have been skipped by STT3A. STT3A-containing OST-A complex is also required to prevent hyperglycosylation of some target proteins by preventing glycosylation of facultative sites before folding of target proteins is completed. The protein is Dolichyl-diphosphooligosaccharide--protein glycosyltransferase subunit STT3A of Homo sapiens (Human).